The chain runs to 521 residues: Glutamyl-tRNA(Gln) amidotransferase subunit A, mitochondrial (521 aa).

Active-site charge relay system residues include Lys-61 and Ser-139. Ser-163 functions as the Acyl-ester intermediate in the catalytic mechanism.

It belongs to the amidase family. GatA subfamily. As to quaternary structure, subunit of the heterotrimeric GatCAB amidotransferase (AdT) complex, composed of A, B and C subunits.

It localises to the mitochondrion. It carries out the reaction L-glutamyl-tRNA(Gln) + L-glutamine + ATP + H2O = L-glutaminyl-tRNA(Gln) + L-glutamate + ADP + phosphate + H(+). Functionally, allows the formation of correctly charged Gln-tRNA(Gln) through the transamidation of misacylated Glu-tRNA(Gln) in the mitochondria. The reaction takes place in the presence of glutamine and ATP through an activated gamma-phospho-Glu-tRNA(Gln). This is Glutamyl-tRNA(Gln) amidotransferase subunit A, mitochondrial from Ajellomyces capsulatus (strain G186AR / H82 / ATCC MYA-2454 / RMSCC 2432) (Darling's disease fungus).